Consider the following 409-residue polypeptide: Peptidase T (409 aa).

His-78 lines the Zn(2+) pocket. Asp-80 is a catalytic residue. A Zn(2+)-binding site is contributed by Asp-140. Glu-173 serves as the catalytic Proton acceptor. Residues Glu-174, Asp-196, and His-379 each coordinate Zn(2+).

This sequence belongs to the peptidase M20B family. The cofactor is Zn(2+).

The protein localises to the cytoplasm. The catalysed reaction is Release of the N-terminal residue from a tripeptide.. Cleaves the N-terminal amino acid of tripeptides. In Salmonella paratyphi C (strain RKS4594), this protein is Peptidase T.